A 144-amino-acid polypeptide reads, in one-letter code: HTH-type transcriptional regulator LrpC (144 aa).

The HTH asnC-type domain maps to 3–64; it reads LDQIDLNIIE…EVDQKKLGLP (62 aa). A DNA-binding region (H-T-H motif) is located at residues 22 to 41; it reads MRELGRKIKLSPPSVTERVR.

Transcriptional regulator with a possible role in regulation of amino acid metabolism. Plays a role in the growth phase transition. The protein is HTH-type transcriptional regulator LrpC (lrpC) of Bacillus subtilis (strain 168).